Consider the following 690-residue polypeptide: Cysteine-rich receptor-like protein kinase 21 (690 aa).

Residues 1–24 form the signal peptide; the sequence is MQKNKMVDLRAIFWFVVISSCAVA. The Gnk2-homologous 1 domain occupies 25-129; the sequence is APTCIQRSDF…CLVRYSNHLI (105 aa). The Extracellular segment spans residues 25 to 281; it reads APTCIQRSDF…KDGKNISTGS (257 aa). 6 N-linked (GlcNAc...) asparagine glycosylation sites follow: N130, N148, N155, N220, N268, and N276. The 107-residue stretch at 140–246 folds into the Gnk2-homologous 2 domain; the sequence is AEYIEYKYNT…CFMRWDLQPF (107 aa). Residues 282–302 form a helical membrane-spanning segment; it reads IVAIAVVSVVVSTVLLALGYA. Topologically, residues 303 to 690 are cytoplasmic; that stretch reads VSRRRKAYQS…DASITSVRPR (388 aa). Positions 363–640 constitute a Protein kinase domain; sequence FHKSNKLGHG…IFRMLTNVSI (278 aa). ATP is bound by residues 369–377 and K391; that span reads LGHGGFGAV. Position 436 is a phosphotyrosine (Y436). The active-site Proton acceptor is the D488. Residue S492 is modified to Phosphoserine. A Phosphothreonine modification is found at T528. Phosphotyrosine is present on Y536.

Belongs to the protein kinase superfamily. Ser/Thr protein kinase family. CRK subfamily.

It localises to the membrane. It catalyses the reaction L-seryl-[protein] + ATP = O-phospho-L-seryl-[protein] + ADP + H(+). The enzyme catalyses L-threonyl-[protein] + ATP = O-phospho-L-threonyl-[protein] + ADP + H(+). The protein is Cysteine-rich receptor-like protein kinase 21 (CRK21) of Arabidopsis thaliana (Mouse-ear cress).